The chain runs to 197 residues: Protein SPMIP2 (197 aa).

Residues 161-197 (SKAALPIGSRPPKLPKLPKKEEKSKFRPLHQHDARCY) form a disordered region. Residues 178–197 (PKKEEKSKFRPLHQHDARCY) are compositionally biased toward basic and acidic residues.

The chain is Protein SPMIP2 (SPMIP2) from Bos taurus (Bovine).